The chain runs to 279 residues: Orotidine 5'-phosphate decarboxylase (279 aa).

Residues Asp8, Lys30, 58–67, Thr117, Arg177, Gln186, Gly206, and Arg207 contribute to the substrate site; that span reads DLKIHDIPNT. Lys60 (proton donor) is an active-site residue.

The protein belongs to the OMP decarboxylase family. Type 1 subfamily. As to quaternary structure, homodimer.

It catalyses the reaction orotidine 5'-phosphate + H(+) = UMP + CO2. The protein operates within pyrimidine metabolism; UMP biosynthesis via de novo pathway; UMP from orotate: step 2/2. In terms of biological role, catalyzes the decarboxylation of orotidine 5'-monophosphate (OMP) to uridine 5'-monophosphate (UMP). The polypeptide is Orotidine 5'-phosphate decarboxylase (Campylobacter jejuni (strain RM1221)).